The following is a 127-amino-acid chain: Large ribosomal subunit protein bL12 (127 aa).

Residues 101–127 (VKTGVSKEEAEDAKKQLVESGAEVEIK) are disordered. The span at 105–117 (VSKEEAEDAKKQL) shows a compositional bias: basic and acidic residues.

It belongs to the bacterial ribosomal protein bL12 family. Homodimer. Part of the ribosomal stalk of the 50S ribosomal subunit. Forms a multimeric L10(L12)X complex, where L10 forms an elongated spine to which 2 to 4 L12 dimers bind in a sequential fashion. Binds GTP-bound translation factors.

Functionally, forms part of the ribosomal stalk which helps the ribosome interact with GTP-bound translation factors. Is thus essential for accurate translation. In Geobacter metallireducens (strain ATCC 53774 / DSM 7210 / GS-15), this protein is Large ribosomal subunit protein bL12.